A 343-amino-acid chain; its full sequence is Ribosomal RNA small subunit methyltransferase C (343 aa).

This sequence belongs to the methyltransferase superfamily. RsmC family. In terms of assembly, monomer.

The protein resides in the cytoplasm. It carries out the reaction guanosine(1207) in 16S rRNA + S-adenosyl-L-methionine = N(2)-methylguanosine(1207) in 16S rRNA + S-adenosyl-L-homocysteine + H(+). In terms of biological role, specifically methylates the guanine in position 1207 of 16S rRNA in the 30S particle. In Escherichia fergusonii (strain ATCC 35469 / DSM 13698 / CCUG 18766 / IAM 14443 / JCM 21226 / LMG 7866 / NBRC 102419 / NCTC 12128 / CDC 0568-73), this protein is Ribosomal RNA small subunit methyltransferase C.